Here is a 489-residue protein sequence, read N- to C-terminus: 3-octaprenyl-4-hydroxybenzoate carboxy-lyase (489 aa).

Asn-172 is a binding site for Mn(2+). Residues Ile-175–Arg-177, Arg-189–Leu-191, and Arg-194–Gly-195 each bind prenylated FMN. Glu-238 serves as a coordination point for Mn(2+). Asp-287 functions as the Proton donor in the catalytic mechanism.

Belongs to the UbiD family. Homohexamer. Prenylated FMN is required as a cofactor. Requires Mn(2+) as cofactor.

The protein localises to the cell membrane. The catalysed reaction is a 4-hydroxy-3-(all-trans-polyprenyl)benzoate + H(+) = a 2-(all-trans-polyprenyl)phenol + CO2. The protein operates within cofactor biosynthesis; ubiquinone biosynthesis. Functionally, catalyzes the decarboxylation of 3-octaprenyl-4-hydroxy benzoate to 2-octaprenylphenol, an intermediate step in ubiquinone biosynthesis. The chain is 3-octaprenyl-4-hydroxybenzoate carboxy-lyase from Salmonella arizonae (strain ATCC BAA-731 / CDC346-86 / RSK2980).